The following is a 499-amino-acid chain: Protein SENSITIVE TO PROTON RHIZOTOXICITY 1 (499 aa).

A disordered region spans residues 1-31; sequence METEDDLCNTNWGSSSSKSREPGSSDCGNST. Residues 244-266 form a C2H2-type 1 zinc finger; that stretch reads HFCTICGKGFKRDANLRMHMRGH. The C2H2-type 2; atypical zinc-finger motif lies at 354–385; that stretch reads KHCGKNKWLCSCGTTFSRKDKLFGHIALFQGH. Residues 390 to 436 are disordered; sequence PLEETKPSASTSTQRGSSEGGNNNQGMVGFNLGSASNANQETTQPGM. Polar residues-rich tracts occupy residues 396–415 and 422–435; these read PSAS…NNQG and GSAS…TQPG.

Expressed in roots (e.g. root tips and lateral roots), leaves, flowers (e.g. stigma, sepal, anther, and filament), stems, siliques and cotyledons.

It localises to the nucleus. Its function is as follows. Probable transcription factor. Together with STOP2, plays a critical role in tolerance to major stress factors in acid soils such as proton H(+) and aluminum ion Al(3+). Required for the expression of genes in response to acidic stress (e.g. ALMT1 and MATE), and Al-activated citrate exudation. The protein is Protein SENSITIVE TO PROTON RHIZOTOXICITY 1 of Arabidopsis thaliana (Mouse-ear cress).